We begin with the raw amino-acid sequence, 892 residues long: MLSAKILERSGYLRKQCPLCKSYFWTLRHDQVYCGDQPCVPYGFIGSPPVKVAVDSLTELRERFLRFFERRGHARIKRYPVVARWRDDVYLVGASIYDFQPWVTSGAVPPPANPLVISQPSIRLTDVDKVGRSGRHLTGFEMMAHHAFNYPDKYVYWIDETTEYAYEFFTKELGITPEEITFKESMWEGGGNAGECYEVLVRGLEVATLVFMHYETKEGKYVELPLKIVDTGYGLERIYWLLKGTPTIYDAVFGPFLDRARQKLGVPEPPAEVMGKASIYFGQMDPEVIGLEKAYDLIAEKIGVDGKWLREVFRPQEALYVLADHSRTVSWMIADGVIPSNSGAGYLARLLIRRILKNLKLAGIEAPLVELIDMHLKELKVDYPEVWAARDLILELVDLEERKYKEILKSAPTVVKKALDEARRRGAASLSPDDLVALYDSFGLPPEIVADVAKTQGVEVKVPDDFYSRLAARHAKKEKQPESTLVEMAKVIDLPRTRELFYEDPYMRSFKAKVLRVVDGKYVVLDQTAFYAEGGGQPGDVGVLKYSGGAAKVVDVQRVGHIIVHVVEGQPPPEGVEVVGEIDWERRYALMKMHTGTHVLIQSIRRVLGPHIWQAGAQKDIPSSRLDVTHYKLPTPEEVAEIERLANSAVQANLPVYVKIMPRNEAEAKYGFILYQGGVVPAREIRVVQIGPDSDPYDVQACGGTHLKSTGEIGIIKIQKVERIADGVVRFIFTTGLHALSYIQELERQLGQAAQVAGGSRDNVVEAVKRLASRAEEAERKWRHYAELYAKQMAQSLKAEQVGRYKLAVVELDDEDLAKKVAEEATGRDKDLVLVVMGGNKLSIFTGGADVAPIVKSLREVGFRGGGSRTFAQGVYSGDVKTLIDALRRALS.

The Zn(2+) site is built by H594, H598, C702, and H706.

Belongs to the class-II aminoacyl-tRNA synthetase family. Zn(2+) is required as a cofactor.

Its subcellular location is the cytoplasm. It catalyses the reaction tRNA(Ala) + L-alanine + ATP = L-alanyl-tRNA(Ala) + AMP + diphosphate. Its function is as follows. Catalyzes the attachment of alanine to tRNA(Ala) in a two-step reaction: alanine is first activated by ATP to form Ala-AMP and then transferred to the acceptor end of tRNA(Ala). Also edits incorrectly charged Ser-tRNA(Ala) and Gly-tRNA(Ala) via its editing domain. The sequence is that of Alanine--tRNA ligase from Pyrobaculum arsenaticum (strain DSM 13514 / JCM 11321 / PZ6).